A 556-amino-acid polypeptide reads, in one-letter code: 2-succinyl-5-enolpyruvyl-6-hydroxy-3-cyclohexene-1-carboxylate synthase (556 aa).

The protein belongs to the TPP enzyme family. MenD subfamily. As to quaternary structure, homodimer. It depends on Mg(2+) as a cofactor. The cofactor is Mn(2+). Requires thiamine diphosphate as cofactor.

It catalyses the reaction isochorismate + 2-oxoglutarate + H(+) = 5-enolpyruvoyl-6-hydroxy-2-succinyl-cyclohex-3-ene-1-carboxylate + CO2. The protein operates within quinol/quinone metabolism; 1,4-dihydroxy-2-naphthoate biosynthesis; 1,4-dihydroxy-2-naphthoate from chorismate: step 2/7. Its pathway is quinol/quinone metabolism; menaquinone biosynthesis. Functionally, catalyzes the thiamine diphosphate-dependent decarboxylation of 2-oxoglutarate and the subsequent addition of the resulting succinic semialdehyde-thiamine pyrophosphate anion to isochorismate to yield 2-succinyl-5-enolpyruvyl-6-hydroxy-3-cyclohexene-1-carboxylate (SEPHCHC). The chain is 2-succinyl-5-enolpyruvyl-6-hydroxy-3-cyclohexene-1-carboxylate synthase from Shigella boydii serotype 4 (strain Sb227).